Consider the following 115-residue polypeptide: Cytochrome c (115 aa).

Heme c is bound by residues Cys-26, Cys-29, His-30, and Met-91.

The protein belongs to the cytochrome c family. Binds 1 heme c group covalently per subunit.

The protein resides in the mitochondrion intermembrane space. Electron carrier protein. The oxidized form of the cytochrome c heme group can accept an electron from the heme group of the cytochrome c1 subunit of cytochrome reductase. Cytochrome c then transfers this electron to the cytochrome oxidase complex, the final protein carrier in the mitochondrial electron-transport chain. The protein is Cytochrome c of Theileria parva (East coast fever infection agent).